We begin with the raw amino-acid sequence, 259 residues long: Beta-glucanase (259 aa).

The signal sequence occupies residues 1-31 (MVKSKYLVFISVFSLLFGVFVVGFSHQGVKA). A GH16 domain is found at 35–255 (RPMGTAFYES…WVRYTPLQNY (221 aa)). The active-site Nucleophile is glutamate 142. The active-site Proton donor is glutamate 146.

This sequence belongs to the glycosyl hydrolase 16 family.

It carries out the reaction Hydrolysis of (1-&gt;4)-beta-D-glucosidic linkages in beta-D-glucans containing (1-&gt;3)- and (1-&gt;4)-bonds.. In terms of biological role, hydrolyzes B-glucans containing mixed beta-1,3 and beta-1,4 linkages. The sequence is that of Beta-glucanase (bglBB) from Brevibacillus brevis (Bacillus brevis).